Consider the following 286-residue polypeptide: MPFTGATRVLGIIGQPVSHSLSPLMQNAALQAMGLDYAYVPFAVEEDCLADAVRGLAALGVVGFNVTIPHKSAILPLLDRLSPEAELIGAANVVKREGSDLVGYNTDGTGFIQSLSEDLGFTPAGCRILVMGAGGAARAAVASLAGAGAASVVIANRSIARGEELSAAFRRHFIGTQFAAIPLDPENLNRCVQNFDLLVNTSSVGMGGTAFPGMDLSRMGPHGAVYDMVYVPAVTPLLAEAERCGIRYANGIGMLAAQGECALELWTGVRPPEGLMKACLMAALMS.

Residues Ser20–Ser22 and Thr67 each bind shikimate. Catalysis depends on Lys71, which acts as the Proton acceptor. Asn92 and Asp107 together coordinate shikimate. NADP(+) is bound by residues Gly132 to Ala136 and Met228. Tyr230 lines the shikimate pocket. Gly251 serves as a coordination point for NADP(+).

It belongs to the shikimate dehydrogenase family. As to quaternary structure, homodimer.

It carries out the reaction shikimate + NADP(+) = 3-dehydroshikimate + NADPH + H(+). It participates in metabolic intermediate biosynthesis; chorismate biosynthesis; chorismate from D-erythrose 4-phosphate and phosphoenolpyruvate: step 4/7. Involved in the biosynthesis of the chorismate, which leads to the biosynthesis of aromatic amino acids. Catalyzes the reversible NADPH linked reduction of 3-dehydroshikimate (DHSA) to yield shikimate (SA). The chain is Shikimate dehydrogenase (NADP(+)) from Geobacter sulfurreducens (strain ATCC 51573 / DSM 12127 / PCA).